Consider the following 244-residue polypeptide: Probable Ni/Fe-hydrogenase B-type cytochrome subunit (244 aa).

Helical transmembrane passes span 39-59 (LWHW…FFIG), 73-93 (FLMG…AIGM), 150-171 (FAMF…FAMY), and 204-221 (LGMW…YAAI).

It belongs to the HupC/HyaC/HydC family.

It is found in the cell membrane. Functionally, probable b-type cytochrome. This is Probable Ni/Fe-hydrogenase B-type cytochrome subunit (hoxZ) from Cupriavidus necator (strain ATCC 17699 / DSM 428 / KCTC 22496 / NCIMB 10442 / H16 / Stanier 337) (Ralstonia eutropha).